The primary structure comprises 156 residues: Arginine repressor (156 aa).

The protein belongs to the ArgR family.

The protein localises to the cytoplasm. It participates in amino-acid biosynthesis; L-arginine biosynthesis [regulation]. In terms of biological role, regulates arginine biosynthesis genes. This chain is Arginine repressor, found in Escherichia coli O81 (strain ED1a).